A 509-amino-acid chain; its full sequence is MSSNATTRDFATTVAKALIAPGVCDTHGMSYPSIGAPKQLITVHGNASMTTDAGVTSVVAYLDPLSFRSGQLTATLVGRNGNLEPIQSTQVDIGTASSDFSAGSVLSLAITGENTSGDDSVSGTVAAGVTHDLIDDAQAMSHAKLERQTEYKDFVYKSAREGAVNAVAITPYLQGGSAYVGRGASTNKSSVKSVYTAGASGGLAALGFPAGLDGTATSGSTLTEKIMWHAKNVTADKARFLNGAAKVIEFDVSLASTAASTSTGAPPINYVIEYVDSTSETGVMVPAGAASAHAAFAAGRASFSITKPIKDIILKTSQANSQAVSSLVVSVTEQYECADIPEAPRAFVVFEGLKPGTSIVSVRCAATLAVTPSPENVSLMHRAPISTDVDYSLFFEFMTAFTRDAPMAFTPESRTQFLTMFDSPTSMRALQLAFDFDRGFRTVGRGLRNFARAAKETRHQASQIAKKVDPIFVAIKGEDIPFLSDAANLGHLAVRGAQRTTMLEAASYM.

It is found in the virion. In Micromonas pusilla reovirus (isolate Netherlands/2005) (MpRV), this protein is Putative outer capsid protein VP5 (S5).